Here is a 277-residue protein sequence, read N- to C-terminus: UPF0276 protein PP_0992 (277 aa).

This sequence belongs to the UPF0276 family.

This Pseudomonas putida (strain ATCC 47054 / DSM 6125 / CFBP 8728 / NCIMB 11950 / KT2440) protein is UPF0276 protein PP_0992.